The sequence spans 343 residues: Ribosomal RNA small subunit methyltransferase C (343 aa).

It belongs to the methyltransferase superfamily. RsmC family. As to quaternary structure, monomer.

The protein localises to the cytoplasm. The enzyme catalyses guanosine(1207) in 16S rRNA + S-adenosyl-L-methionine = N(2)-methylguanosine(1207) in 16S rRNA + S-adenosyl-L-homocysteine + H(+). Its function is as follows. Specifically methylates the guanine in position 1207 of 16S rRNA in the 30S particle. The polypeptide is Ribosomal RNA small subunit methyltransferase C (Escherichia coli O81 (strain ED1a)).